Here is a 285-residue protein sequence, read N- to C-terminus: HTH-type transcriptional regulator MurR (285 aa).

Residues 1 to 77 form the HTH rpiR-type domain; sequence MLYLTKIRNA…MALIGEYSAS (77 aa). Positions 37–56 form a DNA-binding region, H-T-H motif; it reads SRKMAKQLGISQSSIVKFAQ. Residues 128–268 form the SIS domain; the sequence is IIEVISKAPF…FVGLVQLNDV (141 aa).

In terms of assembly, homotetramer.

It participates in amino-sugar metabolism; N-acetylmuramate degradation [regulation]. Represses the expression of the murPQ operon involved in the uptake and degradation of N-acetylmuramic acid (MurNAc). Binds to two adjacent inverted repeats within the operator region. MurNAc 6-phosphate, the substrate of MurQ, is the specific inducer that weakens binding of MurR to the operator. The protein is HTH-type transcriptional regulator MurR of Escherichia coli O157:H7.